Consider the following 428-residue polypeptide: MLDIRLIRKEPKECESRLQKKDPAISLERLLDLDKTVRQLKADSEALLAKRKVLSGQIHKAKVANENADALIQEVNTIADQLVAFETTLQEQEALLEDLMARLPNYPDEDVPVSPDKTGNQMIKSHGEVPTFPFPPKHHMQLNEALQILDFKLPAKTTGSGWPAYCNEGVLLEWALLTYLLNKQQAHGFQLWLPPLLVKRDILFGSGQIPKFDGQYYRVEDGDRSLFLIPTAEVVLNGFHSQEILNEQDLPLCYAAFTPCFRREAGAGGAHERGLVRVHQFHKVEMFAFTTPEQEEVVYQKMLHVVEEILSELQLPYQLSLLSTGDMSFTAKKTIDAEVWLPGQKAFYEVSSISKCGDFQARRSETRYRDAQGKLHFVNTLNGSGLATPRLLVAILENYQQADGSVVIPSVLRPYMNNQEILLPKTVR.

An L-serine-binding site is contributed by 231–233 (TAE). ATP-binding positions include 262 to 264 (RRE) and Val278. Residue Glu285 coordinates L-serine. 349-352 (EVSS) is a binding site for ATP. Ser384 serves as a coordination point for L-serine.

This sequence belongs to the class-II aminoacyl-tRNA synthetase family. Type-1 seryl-tRNA synthetase subfamily. As to quaternary structure, homodimer. The tRNA molecule binds across the dimer.

The protein resides in the cytoplasm. The catalysed reaction is tRNA(Ser) + L-serine + ATP = L-seryl-tRNA(Ser) + AMP + diphosphate + H(+). It catalyses the reaction tRNA(Sec) + L-serine + ATP = L-seryl-tRNA(Sec) + AMP + diphosphate + H(+). It participates in aminoacyl-tRNA biosynthesis; selenocysteinyl-tRNA(Sec) biosynthesis; L-seryl-tRNA(Sec) from L-serine and tRNA(Sec): step 1/1. Its function is as follows. Catalyzes the attachment of serine to tRNA(Ser). Is also able to aminoacylate tRNA(Sec) with serine, to form the misacylated tRNA L-seryl-tRNA(Sec), which will be further converted into selenocysteinyl-tRNA(Sec). This Chlamydia trachomatis serovar L2 (strain ATCC VR-902B / DSM 19102 / 434/Bu) protein is Serine--tRNA ligase.